The sequence spans 121 residues: Small ribosomal subunit protein uS13 (121 aa).

Residues 89–121 are disordered; the sequence is MRHRRGLPVRGQHTKNNARTRKGKKVSIAGRKK.

This sequence belongs to the universal ribosomal protein uS13 family. Part of the 30S ribosomal subunit. Forms a loose heterodimer with protein S19. Forms two bridges to the 50S subunit in the 70S ribosome.

Functionally, located at the top of the head of the 30S subunit, it contacts several helices of the 16S rRNA. In the 70S ribosome it contacts the 23S rRNA (bridge B1a) and protein L5 of the 50S subunit (bridge B1b), connecting the 2 subunits; these bridges are implicated in subunit movement. Contacts the tRNAs in the A and P-sites. The polypeptide is Small ribosomal subunit protein uS13 (Pediococcus pentosaceus (strain ATCC 25745 / CCUG 21536 / LMG 10740 / 183-1w)).